The following is a 438-amino-acid chain: Enolase (438 aa).

A (2R)-2-phosphoglycerate-binding site is contributed by glutamine 174. Residue glutamate 216 is the Proton donor of the active site. 3 residues coordinate Mg(2+): aspartate 253, glutamate 297, and aspartate 324. The (2R)-2-phosphoglycerate site is built by lysine 349, arginine 378, serine 379, and lysine 400. Lysine 349 acts as the Proton acceptor in catalysis.

Belongs to the enolase family. In terms of assembly, component of the RNA degradosome, a multiprotein complex involved in RNA processing and mRNA degradation. Mg(2+) serves as cofactor.

It is found in the cytoplasm. The protein resides in the secreted. It localises to the cell surface. The catalysed reaction is (2R)-2-phosphoglycerate = phosphoenolpyruvate + H2O. Its pathway is carbohydrate degradation; glycolysis; pyruvate from D-glyceraldehyde 3-phosphate: step 4/5. Functionally, catalyzes the reversible conversion of 2-phosphoglycerate (2-PG) into phosphoenolpyruvate (PEP). It is essential for the degradation of carbohydrates via glycolysis. The protein is Enolase of Psychrobacter arcticus (strain DSM 17307 / VKM B-2377 / 273-4).